Here is a 214-residue protein sequence, read N- to C-terminus: Small ribosomal subunit protein uS3c (214 aa).

In terms of domain architecture, KH type-2 spans 39–111 (IRTYLNKLAK…QLTINIIEVE (73 aa)).

Belongs to the universal ribosomal protein uS3 family. As to quaternary structure, part of the 30S ribosomal subunit.

The protein localises to the plastid. It localises to the chloroplast. This chain is Small ribosomal subunit protein uS3c (rps3), found in Trieres chinensis (Marine centric diatom).